The sequence spans 354 residues: NADH-quinone oxidoreductase subunit H (354 aa).

Transmembrane regions (helical) follow at residues 22-42 (ILIR…YLIL), 91-111 (YLIA…VIPF), 124-144 (LLYV…AGWA), 168-188 (MGFA…SAIV), 203-223 (VLSW…ISGV), 255-275 (LFFL…ALLF), 291-311 (IPGF…FIWI), and 326-346 (LGWK…AIWI).

This sequence belongs to the complex I subunit 1 family. NDH-1 is composed of 14 different subunits. Subunits NuoA, H, J, K, L, M, N constitute the membrane sector of the complex.

It is found in the cell inner membrane. It catalyses the reaction a quinone + NADH + 5 H(+)(in) = a quinol + NAD(+) + 4 H(+)(out). In terms of biological role, NDH-1 shuttles electrons from NADH, via FMN and iron-sulfur (Fe-S) centers, to quinones in the respiratory chain. The immediate electron acceptor for the enzyme in this species is believed to be ubiquinone. Couples the redox reaction to proton translocation (for every two electrons transferred, four hydrogen ions are translocated across the cytoplasmic membrane), and thus conserves the redox energy in a proton gradient. This subunit may bind ubiquinone. This Cupriavidus pinatubonensis (strain JMP 134 / LMG 1197) (Cupriavidus necator (strain JMP 134)) protein is NADH-quinone oxidoreductase subunit H.